We begin with the raw amino-acid sequence, 302 residues long: Methionyl-tRNA formyltransferase (302 aa).

106–109 (SVLP) serves as a coordination point for (6S)-5,6,7,8-tetrahydrofolate.

This sequence belongs to the Fmt family.

It carries out the reaction L-methionyl-tRNA(fMet) + (6R)-10-formyltetrahydrofolate = N-formyl-L-methionyl-tRNA(fMet) + (6S)-5,6,7,8-tetrahydrofolate + H(+). Its function is as follows. Attaches a formyl group to the free amino group of methionyl-tRNA(fMet). The formyl group appears to play a dual role in the initiator identity of N-formylmethionyl-tRNA by promoting its recognition by IF2 and preventing the misappropriation of this tRNA by the elongation apparatus. The chain is Methionyl-tRNA formyltransferase from Hydrogenobaculum sp. (strain Y04AAS1).